The sequence spans 370 residues: Glutathione S-transferase omega-like 2 (370 aa).

R15 serves as a coordination point for glutathione. C46 acts as the Nucleophile in catalysis. Glutathione contacts are provided by W79, R155, V158, E173, and S174. The GST C-terminal domain occupies 201–353 (PAQLKTQIDD…LHYTRSHTRI (153 aa)).

Belongs to the GST superfamily. Omega family. As to quaternary structure, homodimer.

Its subcellular location is the cytoplasm. It carries out the reaction RX + glutathione = an S-substituted glutathione + a halide anion + H(+). The catalysed reaction is L-dehydroascorbate + 2 glutathione = glutathione disulfide + L-ascorbate. Functionally, active as '1-Cys' thiol transferase against beta-hydroxyethyl disulfide (HED), as dehydroascorbate reductase and as dimethylarsinic acid reductase, while not active against the standard GST substrate 1-chloro-2,4-dinitrobenzene (CDNB). May be involved in cell wall organization and biogenesis. This chain is Glutathione S-transferase omega-like 2, found in Saccharomyces cerevisiae (strain ATCC 204508 / S288c) (Baker's yeast).